A 120-amino-acid polypeptide reads, in one-letter code: Large ribosomal subunit protein bL12 (120 aa).

The protein belongs to the bacterial ribosomal protein bL12 family. In terms of assembly, homodimer. Part of the ribosomal stalk of the 50S ribosomal subunit. Forms a multimeric L10(L12)X complex, where L10 forms an elongated spine to which 2 to 4 L12 dimers bind in a sequential fashion. Binds GTP-bound translation factors.

Forms part of the ribosomal stalk which helps the ribosome interact with GTP-bound translation factors. Is thus essential for accurate translation. This is Large ribosomal subunit protein bL12 from Pseudoalteromonas translucida (strain TAC 125).